The chain runs to 493 residues: 2-amino-4-deoxychorismate synthase (493 aa).

This sequence belongs to the anthranilate synthase component I family. The cofactor is Mg(2+).

The enzyme catalyses (2S)-2-amino-4-deoxychorismate + L-glutamate = chorismate + L-glutamine. Functionally, converts chorismate to 2-amino-4-deoxychorismate (ADIC). Involved in the biosynthesis of the benzoxazolinate moiety of the enediyne antitumor antibiotic C-1027. The protein is 2-amino-4-deoxychorismate synthase (sgcD) of Streptomyces globisporus.